Here is a 30-residue protein sequence, read N- to C-terminus: Bowman-Birk type proteinase inhibitor 4 (30 aa).

Disulfide bonds link Cys9–Cys24 and Cys14–Cys22.

In terms of biological role, inhibits trypsin (IC(50)=17.60 nM) and, to a lesser extent, alpha-chymotrypsin (IC(50)=2.38 uM). The protein is Bowman-Birk type proteinase inhibitor 4 of Lathyrus sativus (White vetchling).